A 349-amino-acid chain; its full sequence is Dipeptide transport ATP-binding protein DppD (349 aa).

Residues 7-258 (LEVKNLHVNF…PQHPYTWGLL (252 aa)) enclose the ABC transporter domain. ATP is bound at residue 43 to 50 (GESGSGKS).

This sequence belongs to the ABC transporter superfamily. In terms of assembly, the complex is composed of two ATP-binding proteins (DppD and DppF), two transmembrane proteins (DppB and DppC) and a solute-binding protein (DppA).

It localises to the cell membrane. The enzyme catalyses a dipeptide(out) + ATP + H2O = a dipeptide(in) + ADP + phosphate + H(+). In terms of biological role, part of the ABC transporter DppABCDF involved in dipeptide transport. Responsible for energy coupling to the transport system. The protein is Dipeptide transport ATP-binding protein DppD of Lactococcus lactis subsp. cremoris (strain MG1363).